Here is a 202-residue protein sequence, read N- to C-terminus: ATP-dependent Clp protease proteolytic subunit (202 aa).

Catalysis depends on Ser98, which acts as the Nucleophile. The active site involves His123.

Belongs to the peptidase S14 family. In terms of assembly, fourteen ClpP subunits assemble into 2 heptameric rings which stack back to back to give a disk-like structure with a central cavity, resembling the structure of eukaryotic proteasomes.

It is found in the cytoplasm. It catalyses the reaction Hydrolysis of proteins to small peptides in the presence of ATP and magnesium. alpha-casein is the usual test substrate. In the absence of ATP, only oligopeptides shorter than five residues are hydrolyzed (such as succinyl-Leu-Tyr-|-NHMec, and Leu-Tyr-Leu-|-Tyr-Trp, in which cleavage of the -Tyr-|-Leu- and -Tyr-|-Trp bonds also occurs).. Functionally, cleaves peptides in various proteins in a process that requires ATP hydrolysis. Has a chymotrypsin-like activity. Plays a major role in the degradation of misfolded proteins. In Desulfovibrio desulfuricans (strain ATCC 27774 / DSM 6949 / MB), this protein is ATP-dependent Clp protease proteolytic subunit.